The chain runs to 429 residues: Adenylosuccinate synthetase (429 aa).

Residues 12 to 18 and 40 to 42 each bind GTP; these read GDEGKGK and GHT. The Proton acceptor role is filled by Asp-13. Mg(2+) contacts are provided by Asp-13 and Gly-40. Residues 13-16, 38-41, Thr-128, Arg-142, Gln-223, and Arg-302 each bind IMP; these read DEGK and NAGH. His-41 functions as the Proton donor in the catalytic mechanism. 298-304 contributes to the substrate binding site; the sequence is TVTGRPR. Residues Arg-304, 330–332, and 412–414 contribute to the GTP site; these read LLD and SVG.

This sequence belongs to the adenylosuccinate synthetase family. Homodimer. It depends on Mg(2+) as a cofactor.

It is found in the cytoplasm. It catalyses the reaction IMP + L-aspartate + GTP = N(6)-(1,2-dicarboxyethyl)-AMP + GDP + phosphate + 2 H(+). Its pathway is purine metabolism; AMP biosynthesis via de novo pathway; AMP from IMP: step 1/2. Functionally, plays an important role in the de novo pathway of purine nucleotide biosynthesis. Catalyzes the first committed step in the biosynthesis of AMP from IMP. The chain is Adenylosuccinate synthetase from Lactobacillus delbrueckii subsp. bulgaricus (strain ATCC 11842 / DSM 20081 / BCRC 10696 / JCM 1002 / NBRC 13953 / NCIMB 11778 / NCTC 12712 / WDCM 00102 / Lb 14).